Here is a 218-residue protein sequence, read N- to C-terminus: Probable nicotinate-nucleotide adenylyltransferase (218 aa).

Belongs to the NadD family.

It catalyses the reaction nicotinate beta-D-ribonucleotide + ATP + H(+) = deamido-NAD(+) + diphosphate. It functions in the pathway cofactor biosynthesis; NAD(+) biosynthesis; deamido-NAD(+) from nicotinate D-ribonucleotide: step 1/1. Functionally, catalyzes the reversible adenylation of nicotinate mononucleotide (NaMN) to nicotinic acid adenine dinucleotide (NaAD). The sequence is that of Probable nicotinate-nucleotide adenylyltransferase from Burkholderia cenocepacia (strain ATCC BAA-245 / DSM 16553 / LMG 16656 / NCTC 13227 / J2315 / CF5610) (Burkholderia cepacia (strain J2315)).